The primary structure comprises 266 residues: F-actin-capping protein subunit beta (266 aa).

Belongs to the F-actin-capping protein beta subunit family. Component of the F-actin capping complex, composed of a heterodimer of an alpha and a beta subunit.

Its subcellular location is the cytoplasm. The protein resides in the cytoskeleton. It localises to the actin patch. Functionally, F-actin-capping proteins bind in a Ca(2+)-independent manner to the fast growing ends of actin filaments (barbed end) thereby blocking the exchange of subunits at these ends. Unlike other capping proteins (such as gelsolin and severin), these proteins do not sever actin filaments. This chain is F-actin-capping protein subunit beta (cap2), found in Emericella nidulans (strain FGSC A4 / ATCC 38163 / CBS 112.46 / NRRL 194 / M139) (Aspergillus nidulans).